The following is a 306-amino-acid chain: Probable cobalamin biosynthesis protein CobD (306 aa).

A run of 5 helical transmembrane segments spans residues 54-74 (LFGFLNVVLVLAIVFFMAFEI), 88-108 (ISLYSIILSFSIGHKSLIEFS), 155-175 (ITDSIIAPLIYAAIFGLPGAF), 207-227 (ILNFIPSRIAGMLLIISAPFY), and 286-306 (SLKAVDYSVLLFLIIYMILFM).

Belongs to the CobD/CbiB family.

The protein localises to the cell membrane. It participates in cofactor biosynthesis; adenosylcobalamin biosynthesis. In terms of biological role, converts cobyric acid to cobinamide by the addition of aminopropanol on the F carboxylic group. This chain is Probable cobalamin biosynthesis protein CobD, found in Methanococcus maripaludis (strain DSM 14266 / JCM 13030 / NBRC 101832 / S2 / LL).